A 430-amino-acid chain; its full sequence is Maintenance of mitochondrial morphology protein 1 (430 aa).

The Lumenal segment spans residues Met-1–Gly-70. A helical membrane pass occupies residues Leu-71 to Phe-91. Residues Ala-92–Ile-430 are Cytoplasmic-facing. An SMP-LTD domain is found at Ala-159 to Pro-387. The interval Gly-305–Gly-326 is disordered. Positions Ser-317–Gly-326 are enriched in acidic residues.

Belongs to the MMM1 family. In terms of assembly, homodimer. Component of the ER-mitochondria encounter structure (ERMES) or MDM complex, composed of MMM1, MDM10, MDM12 and MDM34. An MMM1 homodimer associates with one molecule of MDM12 on each side in a pairwise head-to-tail manner, and the SMP-LTD domains of MMM1 and MDM12 generate a continuous hydrophobic tunnel for phospholipid trafficking.

It is found in the endoplasmic reticulum membrane. Its function is as follows. Component of the ERMES/MDM complex, which serves as a molecular tether to connect the endoplasmic reticulum (ER) and mitochondria. Components of this complex are involved in the control of mitochondrial shape and protein biogenesis, and function in nonvesicular lipid trafficking between the ER and mitochondria. The MDM12-MMM1 subcomplex functions in the major beta-barrel assembly pathway that is responsible for biogenesis of all outer membrane beta-barrel proteins, and acts in a late step after the SAM complex. The MDM10-MDM12-MMM1 subcomplex further acts in the TOM40-specific pathway after the action of the MDM12-MMM1 complex. Essential for establishing and maintaining the structure of mitochondria and maintenance of mtDNA nucleoids. The chain is Maintenance of mitochondrial morphology protein 1 from Candida dubliniensis (strain CD36 / ATCC MYA-646 / CBS 7987 / NCPF 3949 / NRRL Y-17841) (Yeast).